A 183-amino-acid chain; its full sequence is Capsid protein (183 aa).

Positions 136 to 183 (NAPILSTLPETTVVRRRGRSPRRRTPSPRRRRSQSPRRRRSQSRESQC) are disordered. A compositionally biased stretch (basic residues) spans 149-176 (VRRRGRSPRRRTPSPRRRRSQSPRRRRS). Phosphoserine; by host occurs at positions 155, 162, and 170. One copy of the 1; half-length repeat lies at 155–161 (SPRRRTP). The 3 X 8 AA repeats of S-P-R-R-R-[PR]-S-Q stretch occupies residues 155 to 177 (SPRRRTPSPRRRRSQSPRRRRSQ). The Bipartite nuclear localization signal motif lies at 158 to 175 (RRTPSPRRRRSQSPRRRR). Repeat copies occupy residues 162–169 (SPRRRRSQ) and 170–177 (SPRRRRSQ). The interval 177–183 (QSRESQC) is RNA binding.

The protein belongs to the orthohepadnavirus core antigen family. In terms of assembly, homodimerizes, then multimerizes. Interacts with cytosol exposed regions of viral L glycoprotein present in the reticulum-to-Golgi compartment. Interacts with human FLNB. Phosphorylated form interacts with host importin alpha; this interaction depends on the exposure of the NLS, which itself depends upon genome maturation and/or phosphorylation of the capsid protein. Interacts with host NUP153. Post-translationally, phosphorylated by host SRPK1, SRPK2, and maybe protein kinase C or GAPDH. Phosphorylation is critical for pregenomic RNA packaging. Protein kinase C phosphorylation is stimulated by HBx protein and may play a role in transport of the viral genome to the nucleus at the late step during the viral replication cycle.

It localises to the virion. Its subcellular location is the host cytoplasm. Self assembles to form an icosahedral capsid. Most capsids appear to be large particles with an icosahedral symmetry of T=4 and consist of 240 copies of capsid protein, though a fraction forms smaller T=3 particles consisting of 180 capsid proteins. Entering capsids are transported along microtubules to the nucleus. Phosphorylation of the capsid is thought to induce exposure of nuclear localization signal in the C-terminal portion of the capsid protein that allows binding to the nuclear pore complex via the importin (karyopherin-) alpha and beta. Capsids are imported in intact form through the nuclear pore into the nuclear basket, where it probably binds NUP153. Only capsids that contain the mature viral genome can release the viral DNA and capsid protein into the nucleoplasm. Immature capsids get stuck in the basket. Capsids encapsulate the pre-genomic RNA and the P protein. Pre-genomic RNA is reverse-transcribed into DNA while the capsid is still in the cytoplasm. The capsid can then either be directed to the nucleus, providing more genomes for transcription, or bud through the endoplasmic reticulum to provide new virions. The polypeptide is Capsid protein (Homo sapiens (Human)).